Reading from the N-terminus, the 762-residue chain is Putative cation exchanger YDL206W (762 aa).

Positions 1-26 (MHKPLRWLITIAFYVSNVILIGYSLS) are cleaved as a signal peptide. Topologically, residues 27–30 (SNGS) are extracellular. Asn28 carries an N-linked (GlcNAc...) asparagine glycan. The helical transmembrane segment at 31–51 (ISEFYLHSVVLIECFSLLGVV) threads the bilayer. At 52–102 (TSDCLTPSLSYISSNIFHISDRVSGMTLLALGNALPDITSTYQSMKSGVTS) the chain is on the cytoplasmic side. The helical transmembrane segment at 103–123 (LAIGELFGGIFFLLTVVIGLM) threads the bilayer. Residues 124–156 (GCVATIQFQHDKSIETYTEESFDQNLSYDRSNY) lie on the Extracellular side of the membrane. N-linked (GlcNAc...) asparagine glycosylation is present at Asn148. Residues 157-177 (ILDVGIFTFMLLVSGTFLADG) traverse the membrane as a helical segment. Residue Arg178 is a topological domain, cytoplasmic. A helical membrane pass occupies residues 179 to 199 (LYFWECIVMVLTYCCCAVYLI). Residues 200–501 (KSYKYPCEIN…YNYLTDVSLE (302 aa)) lie on the Extracellular side of the membrane. Asn280 and Asn329 each carry an N-linked (GlcNAc...) asparagine glycan. Residues 502–522 (IGFFEFLSLLVTTPVSIILYL) form a helical membrane-spanning segment. Residues 523 to 554 (SIPSEISQTDHDLPLSYLQNIQLIASPIILNQ) lie on the Cytoplasmic side of the membrane. A helical membrane pass occupies residues 555–575 (LITNNFSFWLLILSLVIAILL). Over 576–589 (YFKTRTIPNKFNSD) the chain is Extracellular. A helical transmembrane segment spans residues 590 to 610 (IIFTVAFLLSLACLSKAVHII). Residues 611–615 (VVTLT) are Cytoplasmic-facing. The chain crosses the membrane as a helical span at residues 616 to 636 (HWINVFNISETILGLTIFTWG). Residues 637 to 650 (NSIGDLVSNITFVK) lie on the Extracellular side of the membrane. Asn645 is a glycosylation site (N-linked (GlcNAc...) asparagine). Residues 651 to 671 (IGVLEIAIGACFGSPLLYFLF) traverse the membrane as a helical segment. The Cytoplasmic portion of the chain corresponds to 672–709 (GVGFDGIMIMLGDKTGKIVSGRDSNILMHHIDFKVDKN). Residues 710–730 (LINTGVGILIAFLIFTVLIPL) traverse the membrane as a helical segment. The Extracellular portion of the chain corresponds to 731–738 (NDWKIDKK). Residues 739 to 759 (ISIALLTLYIVVTCISVFLEV) form a helical membrane-spanning segment. Residues 760–762 (HQV) lie on the Cytoplasmic side of the membrane.

This sequence belongs to the Ca(2+):cation antiporter (CaCA) (TC 2.A.19) family.

Its subcellular location is the membrane. In terms of biological role, putative cation exchanger. This Saccharomyces cerevisiae (strain ATCC 204508 / S288c) (Baker's yeast) protein is Putative cation exchanger YDL206W.